A 133-amino-acid chain; its full sequence is MPDVDWNMLRGNATQAAAGAYVPYSRFAVGAAALVDDGRVVTGCNVENVSYGLTLCAECAVVCALHSTGGGRLLALACVDGHGSVLMPCGRCRQVLLEHGGSELLIDHPVRPRRLGDLLPDAFGLDDLPRERR.

Residues 4–126 enclose the CMP/dCMP-type deaminase domain; it reads VDWNMLRGNA…DLLPDAFGLD (123 aa). 45–47 serves as a coordination point for substrate; the sequence is NVE. A Zn(2+)-binding site is contributed by cysteine 56. The active-site Proton donor is glutamate 58. Residues cysteine 89 and cysteine 92 each contribute to the Zn(2+) site.

It belongs to the cytidine and deoxycytidylate deaminase family. In terms of assembly, homotetramer. Zn(2+) serves as cofactor.

It catalyses the reaction cytidine + H2O + H(+) = uridine + NH4(+). The enzyme catalyses 2'-deoxycytidine + H2O + H(+) = 2'-deoxyuridine + NH4(+). Its function is as follows. Recycles cytidine and 2-deoxycytidine for uridine and 2-deoxyuridine synthesis, respectively. Catalyzes the hydrolytic deamination of cytidine and 2-deoxycytidine to form, respectively, uridine and 2-deoxyuridine. The protein is Cytidine deaminase (cdd) of Mycobacterium tuberculosis (strain CDC 1551 / Oshkosh).